A 209-amino-acid polypeptide reads, in one-letter code: Large ribosomal subunit protein uL3 (209 aa).

The segment at 141-163 (RAVGSMGASSDPSRTFKNKRMPG) is disordered.

The protein belongs to the universal ribosomal protein uL3 family. In terms of assembly, part of the 50S ribosomal subunit. Forms a cluster with proteins L14 and L19.

In terms of biological role, one of the primary rRNA binding proteins, it binds directly near the 3'-end of the 23S rRNA, where it nucleates assembly of the 50S subunit. The chain is Large ribosomal subunit protein uL3 from Clostridium botulinum (strain Langeland / NCTC 10281 / Type F).